The sequence spans 154 residues: uncharacterized protein (154 aa).

The residue at position 47 (Ser47) is a Phosphoserine.

To yeast YPL229w.

This is an uncharacterized protein from Saccharomyces cerevisiae (strain ATCC 204508 / S288c) (Baker's yeast).